Consider the following 240-residue polypeptide: Eukaryotic translation initiation factor 4E-2 (240 aa).

The tract at residues 1–29 (MVVMDSPVSGRMADQNIDPNTTTSPSPIE) is disordered. Polar residues predominate over residues 17 to 26 (IDPNTTTSPS). EIF4G-binding regions lie at residues 65–68 (HCFQ) and 75–111 (FDNPSSKSNQVIWGSSLRSLYTFATIEEFWSLYNNIH). MRNA is bound by residues 83 to 88 (NQVIWG), K115, and 133 to 134 (WE). A disulfide bridge links C138 with C176. The tract at residues 159–168 (NTLLALVGEQ) is EIF4G-binding. MRNA-binding positions include 183–188 (RTRGDR) and 228–232 (KTLDR).

This sequence belongs to the eukaryotic initiation factor 4E family. As to quaternary structure, EIF4F is a multi-subunit complex, the composition of which varies with external and internal environmental conditions. It is composed of at least EIF4A, EIF4E and EIF4G. EIF4E is also known to interact with other partners. In higher plants two isoforms of EIF4F have been identified, named isoform EIF4F and isoform EIF(iso)4F. Isoform EIF4F has subunits p220 and p26, whereas isoform EIF(iso)4F has subunits p82 and p28. Post-translationally, according to the redox status, the Cys-138-Cys-176 disulfide bridge may have a role in regulating protein function by affecting its ability to bind capped mRNA.

The protein localises to the nucleus. The protein resides in the cytoplasm. Its function is as follows. Component of the protein complex eIF4F, which is involved in the recognition of the mRNA cap, ATP-dependent unwinding of 5'-terminal secondary structure and recruitment of mRNA to the ribosome. Recognizes and binds the 7-methylguanosine-containing mRNA cap during an early step in the initiation of protein synthesis and facilitates ribosome binding by inducing the unwinding of the mRNAs secondary structures. This is Eukaryotic translation initiation factor 4E-2 from Arabidopsis thaliana (Mouse-ear cress).